Reading from the N-terminus, the 396-residue chain is Elongation factor Tu (396 aa).

Residues 10-206 (KPHCNIGTIG…NVDEYIPQPE (197 aa)) enclose the tr-type G domain. Residues 19–26 (GHVDHGKT) form a G1 region. 19 to 26 (GHVDHGKT) is a GTP binding site. Thr-26 provides a ligand contact to Mg(2+). A G2 region spans residues 60–64 (GITIS). The segment at 81–84 (DCPG) is G3. GTP contacts are provided by residues 81-85 (DCPGH) and 136-139 (NKCD). The G4 stretch occupies residues 136 to 139 (NKCD). The G5 stretch occupies residues 174 to 176 (SAL).

The protein belongs to the TRAFAC class translation factor GTPase superfamily. Classic translation factor GTPase family. EF-Tu/EF-1A subfamily. In terms of assembly, monomer.

The protein resides in the cytoplasm. The enzyme catalyses GTP + H2O = GDP + phosphate + H(+). Its function is as follows. GTP hydrolase that promotes the GTP-dependent binding of aminoacyl-tRNA to the A-site of ribosomes during protein biosynthesis. In Bradyrhizobium sp. (strain BTAi1 / ATCC BAA-1182), this protein is Elongation factor Tu.